A 179-amino-acid chain; its full sequence is Bifunctional protein PyrR (179 aa).

The PRPP-binding signature appears at 100–112 (VILVDDVLFTGRT).

Belongs to the purine/pyrimidine phosphoribosyltransferase family. PyrR subfamily. Homodimer and homohexamer; in equilibrium.

The enzyme catalyses UMP + diphosphate = 5-phospho-alpha-D-ribose 1-diphosphate + uracil. Regulates transcriptional attenuation of the pyrimidine nucleotide (pyr) operon by binding in a uridine-dependent manner to specific sites on pyr mRNA. This disrupts an antiterminator hairpin in the RNA and favors formation of a downstream transcription terminator, leading to a reduced expression of downstream genes. Its function is as follows. Also displays a weak uracil phosphoribosyltransferase activity which is not physiologically significant. The chain is Bifunctional protein PyrR from Geobacillus thermodenitrificans (strain NG80-2).